A 205-amino-acid polypeptide reads, in one-letter code: Holliday junction branch migration complex subunit RuvA (205 aa).

Residues 1–64 form a domain I region; the sequence is MIGRLRGTLA…EDAHLLYGFA (64 aa). A domain II region spans residues 65–143; that stretch reads EKRERELFRE…AWETSPAMFT (79 aa). The segment at 144–154 is flexible linker; that stretch reads LVSDGPLPVAS. Residues 154-205 form a domain III region; that stretch reads SESSAEADAVSALVSLGYKPQEASKAIAAIKDKAGLSSEELIRRSLKGMISK.

Belongs to the RuvA family. Homotetramer. Forms an RuvA(8)-RuvB(12)-Holliday junction (HJ) complex. HJ DNA is sandwiched between 2 RuvA tetramers; dsDNA enters through RuvA and exits via RuvB. An RuvB hexamer assembles on each DNA strand where it exits the tetramer. Each RuvB hexamer is contacted by two RuvA subunits (via domain III) on 2 adjacent RuvB subunits; this complex drives branch migration. In the full resolvosome a probable DNA-RuvA(4)-RuvB(12)-RuvC(2) complex forms which resolves the HJ.

Its subcellular location is the cytoplasm. The RuvA-RuvB-RuvC complex processes Holliday junction (HJ) DNA during genetic recombination and DNA repair, while the RuvA-RuvB complex plays an important role in the rescue of blocked DNA replication forks via replication fork reversal (RFR). RuvA specifically binds to HJ cruciform DNA, conferring on it an open structure. The RuvB hexamer acts as an ATP-dependent pump, pulling dsDNA into and through the RuvAB complex. HJ branch migration allows RuvC to scan DNA until it finds its consensus sequence, where it cleaves and resolves the cruciform DNA. This is Holliday junction branch migration complex subunit RuvA from Pseudomonas putida (strain ATCC 47054 / DSM 6125 / CFBP 8728 / NCIMB 11950 / KT2440).